The sequence spans 132 residues: Small ribosomal subunit protein uS9 (132 aa).

This sequence belongs to the universal ribosomal protein uS9 family.

This is Small ribosomal subunit protein uS9 from Blochmanniella pennsylvanica (strain BPEN).